We begin with the raw amino-acid sequence, 199 residues long: Ras-related and estrogen-regulated growth inhibitor (199 aa).

GTP-binding positions include 13-20, 60-64, and 118-121; these read GRAGVGKS, DTAGQ, and NKAD.

Belongs to the small GTPase superfamily. Ras family.

It localises to the cytoplasm. It carries out the reaction GTP + H2O = GDP + phosphate + H(+). Its function is as follows. Binds GDP/GTP and possesses intrinsic GTPase activity. Has higher affinity for GDP than for GTP. The sequence is that of Ras-related and estrogen-regulated growth inhibitor (RERG) from Bos taurus (Bovine).